Reading from the N-terminus, the 468-residue chain is ATP synthase subunit beta (468 aa).

155–162 (GGAGVGKT) contacts ATP.

It belongs to the ATPase alpha/beta chains family. As to quaternary structure, F-type ATPases have 2 components, CF(1) - the catalytic core - and CF(0) - the membrane proton channel. CF(1) has five subunits: alpha(3), beta(3), gamma(1), delta(1), epsilon(1). CF(0) has three main subunits: a(1), b(2) and c(9-12). The alpha and beta chains form an alternating ring which encloses part of the gamma chain. CF(1) is attached to CF(0) by a central stalk formed by the gamma and epsilon chains, while a peripheral stalk is formed by the delta and b chains.

The protein resides in the cell membrane. The catalysed reaction is ATP + H2O + 4 H(+)(in) = ADP + phosphate + 5 H(+)(out). In terms of biological role, produces ATP from ADP in the presence of a proton gradient across the membrane. The catalytic sites are hosted primarily by the beta subunits. The polypeptide is ATP synthase subunit beta (Streptococcus sanguinis (strain SK36)).